The chain runs to 319 residues: 4-diphosphocytidyl-2-C-methyl-D-erythritol kinase (319 aa).

The active site involves K18. 103–113 contributes to the ATP binding site; that stretch reads PIGAGLAGGST. D145 is a catalytic residue.

Belongs to the GHMP kinase family. IspE subfamily.

It carries out the reaction 4-CDP-2-C-methyl-D-erythritol + ATP = 4-CDP-2-C-methyl-D-erythritol 2-phosphate + ADP + H(+). It functions in the pathway isoprenoid biosynthesis; isopentenyl diphosphate biosynthesis via DXP pathway; isopentenyl diphosphate from 1-deoxy-D-xylulose 5-phosphate: step 3/6. Catalyzes the phosphorylation of the position 2 hydroxy group of 4-diphosphocytidyl-2C-methyl-D-erythritol. In Prochlorococcus marinus (strain NATL2A), this protein is 4-diphosphocytidyl-2-C-methyl-D-erythritol kinase.